Here is a 486-residue protein sequence, read N- to C-terminus: Arginine/agmatine antiporter (486 aa).

The next 12 helical transmembrane spans lie at 12 to 32, 41 to 61, 85 to 105, 132 to 152, 160 to 180, 211 to 231, 242 to 262, 296 to 316, 341 to 361, 367 to 387, 418 to 438, and 461 to 481; these read LGAI…GIFS, AGVG…FFIA, GFGP…QIFG, PAIL…LKGI, IIGT…TAFL, STML…VMSA, ATIL…ILPF, VGLL…VAEI, VSLY…YFST, MLSI…AFLV, IWLI…LLAL, and EVTE…LFST.

It belongs to the amino acid-polyamine-organocation (APC) superfamily. Basic amino acid/polyamine antiporter (APA) (TC 2.A.3.2) family.

The protein localises to the cell inner membrane. Functionally, catalyzes the exchange of L-arginine for agmatine. The arginine uptake by the bacterium in the macrophage may be a virulence factor against the host innate immune response. This is Arginine/agmatine antiporter (aaxC) from Chlamydia abortus (strain DSM 27085 / S26/3) (Chlamydophila abortus).